A 37-amino-acid polypeptide reads, in one-letter code: Cytochrome b6-f complex subunit 7 (37 aa).

A helical membrane pass occupies residues 5 to 25 (IFGTAFLFIVLVPVGLALGAF).

This sequence belongs to the PetM family. The 4 large subunits of the cytochrome b6-f complex are cytochrome b6, subunit IV (17 kDa polypeptide, PetD), cytochrome f and the Rieske protein, while the 4 small subunits are PetG, PetL, PetM and PetN. The complex functions as a dimer.

The protein localises to the cellular thylakoid membrane. Its function is as follows. Component of the cytochrome b6-f complex, which mediates electron transfer between photosystem II (PSII) and photosystem I (PSI), cyclic electron flow around PSI, and state transitions. This chain is Cytochrome b6-f complex subunit 7, found in Synechococcus elongatus (strain ATCC 33912 / PCC 7942 / FACHB-805) (Anacystis nidulans R2).